A 113-amino-acid chain; its full sequence is UPF0102 protein Ccon26_01140 (113 aa).

The protein belongs to the UPF0102 family.

The chain is UPF0102 protein Ccon26_01140 from Campylobacter concisus (strain 13826).